The following is a 279-amino-acid chain: Digeranylgeranylglyceryl phosphate synthase (279 aa).

A run of 8 helical transmembrane segments spans residues 14-34, 36-56, 94-114, 131-153, 157-175, 201-221, 224-244, and 259-279; these read VKNCLTASFGTIIGGLIASNF, FGLIGYILLASLIVFLVCGFG, LMISGIIISLFNMICFAIALI, IIGNLIVAYLTGSIFIFGGASVG, ITLILFLCALFATWSREII, IFVAIGFLLCSILLSPLPYIL, FGAPYLMAIMICNVLFILAVL, and SKYIKIIMNLVLLSFVIGSLM.

This sequence belongs to the UbiA prenyltransferase family. DGGGP synthase subfamily. Mg(2+) serves as cofactor.

The protein resides in the cell membrane. It carries out the reaction sn-3-O-(geranylgeranyl)glycerol 1-phosphate + (2E,6E,10E)-geranylgeranyl diphosphate = 2,3-bis-O-(geranylgeranyl)-sn-glycerol 1-phosphate + diphosphate. Its pathway is membrane lipid metabolism; glycerophospholipid metabolism. Prenyltransferase that catalyzes the transfer of the geranylgeranyl moiety of geranylgeranyl diphosphate (GGPP) to the C2 hydroxyl of (S)-3-O-geranylgeranylglyceryl phosphate (GGGP). This reaction is the second ether-bond-formation step in the biosynthesis of archaeal membrane lipids. The sequence is that of Digeranylgeranylglyceryl phosphate synthase from Methanococcus aeolicus (strain ATCC BAA-1280 / DSM 17508 / OCM 812 / Nankai-3).